We begin with the raw amino-acid sequence, 248 residues long: Pulmonary surfactant-associated protein A (248 aa).

The N-terminal stretch at 1–17 (MWLRCLALALTLLMVSG) is a signal peptide. An N-linked (GlcNAc...) asparagine glycan is attached at Asn-20. Positions 28–100 (GNPGIPGTPG…PGERGPPGLP (73 aa)) constitute a Collagen-like domain. A disordered region spans residues 29–103 (NPGIPGTPGS…RGPPGLPASL (75 aa)). 4-hydroxyproline occurs at positions 30, 33, 36, 42, 54, 57, 63, 67, and 70. A compositionally biased stretch (basic and acidic residues) spans 42–51 (PGRDGRDGVK). Positions 54–65 (PGPPGPLGPPGG) are enriched in pro residues. Basic and acidic residues predominate over residues 84 to 93 (ERGEKGEPGE). Residues 132–248 (LVVGRKVFSS…LQYRLAICEF (117 aa)) enclose the C-type lectin domain. Cystine bridges form between Cys-155–Cys-246 and Cys-224–Cys-238. A glycan (N-linked (GlcNAc...) asparagine) is linked at Asn-207. Ca(2+) is bound by residues Glu-215, Arg-217, and Asn-234.

Belongs to the SFTPA family. As to quaternary structure, oligomeric complex of 6 set of homotrimers.

It is found in the secreted. The protein localises to the extracellular space. Its subcellular location is the extracellular matrix. It localises to the surface film. Its function is as follows. In presence of calcium ions, it binds to surfactant phospholipids and contributes to lower the surface tension at the air-liquid interface in the alveoli of the mammalian lung and is essential for normal respiration. Enhances the expression of MYO18A/SP-R210 on alveolar macrophages. This is Pulmonary surfactant-associated protein A (SFTPA1) from Canis lupus familiaris (Dog).